The sequence spans 265 residues: Tryptophan synthase alpha chain (265 aa).

Active-site proton acceptor residues include Glu49 and Asp60.

Belongs to the TrpA family. In terms of assembly, tetramer of two alpha and two beta chains.

It carries out the reaction (1S,2R)-1-C-(indol-3-yl)glycerol 3-phosphate + L-serine = D-glyceraldehyde 3-phosphate + L-tryptophan + H2O. It functions in the pathway amino-acid biosynthesis; L-tryptophan biosynthesis; L-tryptophan from chorismate: step 5/5. Functionally, the alpha subunit is responsible for the aldol cleavage of indoleglycerol phosphate to indole and glyceraldehyde 3-phosphate. This is Tryptophan synthase alpha chain from Paracoccus denitrificans (strain Pd 1222).